A 430-amino-acid polypeptide reads, in one-letter code: Adenylosuccinate synthetase (430 aa).

GTP is bound by residues 12–18 (GDEGKGK) and 40–42 (GHT). The active-site Proton acceptor is aspartate 13. Aspartate 13 and glycine 40 together coordinate Mg(2+). Residues 13–16 (DEGK), 38–41 (NAGH), threonine 129, arginine 143, glutamine 224, threonine 239, and arginine 303 each bind IMP. The active-site Proton donor is the histidine 41. A substrate-binding site is contributed by 299–305 (TVSNRKR). GTP-binding positions include arginine 305, 331 to 333 (KLD), and 413 to 415 (STG).

The protein belongs to the adenylosuccinate synthetase family. As to quaternary structure, homodimer. The cofactor is Mg(2+).

Its subcellular location is the cytoplasm. It carries out the reaction IMP + L-aspartate + GTP = N(6)-(1,2-dicarboxyethyl)-AMP + GDP + phosphate + 2 H(+). Its pathway is purine metabolism; AMP biosynthesis via de novo pathway; AMP from IMP: step 1/2. Functionally, plays an important role in the de novo pathway of purine nucleotide biosynthesis. Catalyzes the first committed step in the biosynthesis of AMP from IMP. The sequence is that of Adenylosuccinate synthetase from Ehrlichia chaffeensis (strain ATCC CRL-10679 / Arkansas).